A 317-amino-acid chain; its full sequence is L-lactate dehydrogenase (317 aa).

NAD(+) contacts are provided by residues V16, D37, K42, Y68, and 82–83 (GA). 2 residues coordinate substrate: Q85 and R91. NAD(+) is bound by residues T104, 121–123 (ATN), and S146. Substrate is bound at residue 123–126 (NPVD). 151 to 154 (DTAR) contributes to the substrate binding site. Residues R156 and H171 each contribute to the beta-D-fructose 1,6-bisphosphate site. Residue H178 is the Proton acceptor of the active site. Y222 bears the Phosphotyrosine mark. T231 lines the substrate pocket.

This sequence belongs to the LDH/MDH superfamily. LDH family. Homotetramer.

The protein resides in the cytoplasm. It carries out the reaction (S)-lactate + NAD(+) = pyruvate + NADH + H(+). It participates in fermentation; pyruvate fermentation to lactate; (S)-lactate from pyruvate: step 1/1. With respect to regulation, allosterically activated by fructose 1,6-bisphosphate (FBP). Functionally, catalyzes the conversion of lactate to pyruvate. The protein is L-lactate dehydrogenase of Corynebacterium efficiens (strain DSM 44549 / YS-314 / AJ 12310 / JCM 11189 / NBRC 100395).